We begin with the raw amino-acid sequence, 66 residues long: Large ribosomal subunit protein bL33c (66 aa).

It belongs to the bacterial ribosomal protein bL33 family.

It is found in the plastid. It localises to the chloroplast. This chain is Large ribosomal subunit protein bL33c, found in Phalaenopsis aphrodite subsp. formosana (Moth orchid).